The primary structure comprises 268 residues: Undecaprenyl-diphosphatase (268 aa).

The next 8 membrane-spanning stretches (helical) occupy residues 1-21 (MSLIYLVVLALVQGITEFLPI), 39-59 (QGPLIDVMAHAGSLLAVLVYF), 85-105 (ALLVAASMPPIIIVAGALVAF), 110-130 (ALRSPRVIAIATLAFALPLWL), 144-164 (MSFKHAALIGIAQLFALIPGA), 187-207 (FSMLMAIPVIAAFGLVSLIEL), 221-241 (DGLIVAGLSFVTAWAAIAVLM), and 247-267 (IGFLPFALYRVGLGLALLVFF).

Belongs to the UppP family.

Its subcellular location is the cell inner membrane. It carries out the reaction di-trans,octa-cis-undecaprenyl diphosphate + H2O = di-trans,octa-cis-undecaprenyl phosphate + phosphate + H(+). Its function is as follows. Catalyzes the dephosphorylation of undecaprenyl diphosphate (UPP). Confers resistance to bacitracin. This Maricaulis maris (strain MCS10) (Caulobacter maris) protein is Undecaprenyl-diphosphatase.